The sequence spans 197 residues: MKLILASASSARRSMLEQAGIDAESIPAAVDEDMVKQSMRAEGASAAETATALAHLKAERISRRYPDSVVIGSDQLLVCEGAWFDKAPDLERARARLLDFRGRAHHLVTSVVCAKGGSRLWHHVETPCLHMRRFSEDFLNRYLAQEGEALLGSVGCYRLEGPGIQLFDRIEGDYFSILGMPLLPLLGFLRQHQALTV.

Residue D74 is the Proton acceptor of the active site.

Belongs to the Maf family. It depends on a divalent metal cation as a cofactor.

It localises to the cytoplasm. The catalysed reaction is a ribonucleoside 5'-triphosphate + H2O = a ribonucleoside 5'-phosphate + diphosphate + H(+). The enzyme catalyses a 2'-deoxyribonucleoside 5'-triphosphate + H2O = a 2'-deoxyribonucleoside 5'-phosphate + diphosphate + H(+). Its function is as follows. Nucleoside triphosphate pyrophosphatase. May have a dual role in cell division arrest and in preventing the incorporation of modified nucleotides into cellular nucleic acids. This chain is Nucleoside triphosphate pyrophosphatase, found in Granulibacter bethesdensis (strain ATCC BAA-1260 / CGDNIH1).